The following is a 97-amino-acid chain: Large ribosomal subunit protein bL28 (97 aa).

This sequence belongs to the bacterial ribosomal protein bL28 family.

This is Large ribosomal subunit protein bL28 from Sphingopyxis alaskensis (strain DSM 13593 / LMG 18877 / RB2256) (Sphingomonas alaskensis).